Here is a 244-residue protein sequence, read N- to C-terminus: Acetoacetate decarboxylase (244 aa).

The active-site Schiff-base intermediate with acetoacetate is the Lys115.

It belongs to the ADC family.

It carries out the reaction acetoacetate + H(+) = acetone + CO2. Catalyzes the conversion of acetoacetate to acetone and carbon dioxide. The protein is Acetoacetate decarboxylase of Streptomyces nogalater.